A 340-amino-acid chain; its full sequence is Lipoate--protein ligase 2 (340 aa).

The BPL/LPL catalytic domain occupies 31-222; that stretch reads FLDEDILFPY…QILGIDDIKE (192 aa). ATP contacts are provided by residues Arg-73, 78–81, Lys-136, and Ala-140; that span reads GAVY. Lys-136 contacts (R)-lipoate. The stretch at 293–321 forms a coiled coil; the sequence is QGDIKDVEEALQGTKMTREDLMHQLKQLD.

The protein belongs to the LplA family.

It catalyses the reaction L-lysyl-[lipoyl-carrier protein] + (R)-lipoate + ATP = N(6)-[(R)-lipoyl]-L-lysyl-[lipoyl-carrier protein] + AMP + diphosphate + H(+). It functions in the pathway protein modification; protein lipoylation via exogenous pathway; protein N(6)-(lipoyl)lysine from lipoate: step 1/2. It participates in protein modification; protein lipoylation via exogenous pathway; protein N(6)-(lipoyl)lysine from lipoate: step 2/2. Its function is as follows. Catalyzes specifically the lipoylation of GcvH-L (SAV0324), likely via the ATP-dependent activation of lipoate to lipoyl-AMP and the transfer of the activated lipoyl onto the lipoyl domain of the target protein. Can also utilize lipoamide as substrate for GcvH-L modification. The protein is Lipoate--protein ligase 2 of Staphylococcus aureus (strain Mu50 / ATCC 700699).